The chain runs to 358 residues: MRKINFSAGPSTLPLEILEQAQKEFCDYQGKGYSIMEISHRTKVFEEVHFGAQEKAKKLYGLNDDYEVLFLQGGASLQFAMIPMNLALNGVCEYVNTGVWTKKAIKEAQILGVNVKIVVSSEESNFDHIPRVEFSDNADYAYICSNNTIYGTQYQNYPKTKAPLIVDASSDFFSRKVDFSNIALFYGGVQKNAGISGLSCIFIRKDMLERSKNKQIPSMLNYLTHAENQSLFNTPPTFAIYMFNLEMDWLLNQGGLDKVHEKNSQKATMLYKCIDLSDGFYKGHADKKDRSLMNVSFNIAKNKDLEPLFVKEAEEAGMIGLKGHRILGGIRASIYNALNLDQVKILCEFMKEFQGKYA.

Arg41 contacts L-glutamate. Residues 75 to 76, Trp100, Thr148, Asp167, and Gln190 each bind pyridoxal 5'-phosphate; that span reads AS. Lys191 is modified (N6-(pyridoxal phosphate)lysine). 233–234 is a pyridoxal 5'-phosphate binding site; the sequence is NT.

Belongs to the class-V pyridoxal-phosphate-dependent aminotransferase family. SerC subfamily. In terms of assembly, homodimer. It depends on pyridoxal 5'-phosphate as a cofactor.

It localises to the cytoplasm. The enzyme catalyses O-phospho-L-serine + 2-oxoglutarate = 3-phosphooxypyruvate + L-glutamate. It carries out the reaction 4-(phosphooxy)-L-threonine + 2-oxoglutarate = (R)-3-hydroxy-2-oxo-4-phosphooxybutanoate + L-glutamate. It participates in amino-acid biosynthesis; L-serine biosynthesis; L-serine from 3-phospho-D-glycerate: step 2/3. Its pathway is cofactor biosynthesis; pyridoxine 5'-phosphate biosynthesis; pyridoxine 5'-phosphate from D-erythrose 4-phosphate: step 3/5. Functionally, catalyzes the reversible conversion of 3-phosphohydroxypyruvate to phosphoserine and of 3-hydroxy-2-oxo-4-phosphonooxybutanoate to phosphohydroxythreonine. This is Phosphoserine aminotransferase from Campylobacter jejuni subsp. doylei (strain ATCC BAA-1458 / RM4099 / 269.97).